A 371-amino-acid chain; its full sequence is Cytochrome b (371 aa).

The next 4 helical transmembrane spans lie at F25–V45, W69–I90, W105–L125, and F170–I190. Residues H75 and H89 each contribute to the heme b site. The heme b site is built by H174 and H188. H193 contributes to the a ubiquinone binding site. Helical transmembrane passes span H218 to F238, L280 to H300, L312 to T332, and F339 to P358.

It belongs to the cytochrome b family. The cytochrome bc1 complex contains 3 respiratory subunits (MT-CYB, CYC1 and UQCRFS1), 2 core proteins (UQCRC1 and UQCRC2) and probably 6 low-molecular weight proteins. Requires heme b as cofactor.

The protein resides in the mitochondrion inner membrane. In terms of biological role, component of the ubiquinol-cytochrome c reductase complex (complex III or cytochrome b-c1 complex) that is part of the mitochondrial respiratory chain. The b-c1 complex mediates electron transfer from ubiquinol to cytochrome c. Contributes to the generation of a proton gradient across the mitochondrial membrane that is then used for ATP synthesis. This is Cytochrome b (MT-CYB) from Liasis mackloti savuensis (Savu python).